A 522-amino-acid polypeptide reads, in one-letter code: Lysophospholipid acyltransferase LPCAT4 (522 aa).

A run of 2 helical transmembrane segments spans residues 43 to 63 and 92 to 112; these read ILGFTLFPLRFLLAAIFLFLM and HLIYLLSRTMFFMCGFHWITI. Residues 130 to 135 carry the HXXXXD motif motif; sequence HSTFFD. N-linked (GlcNAc...) asparagine glycans are attached at residues N166 and N517. Residues 496-522 form a disordered region; sequence GRRKPPHIQQNGGCSGKNNPRNQSKMD. The span at 503–522 shows a compositional bias: polar residues; that stretch reads IQQNGGCSGKNNPRNQSKMD.

Belongs to the 1-acyl-sn-glycerol-3-phosphate acyltransferase family.

It is found in the endoplasmic reticulum membrane. It carries out the reaction a 1-acyl-sn-glycero-3-phosphoethanolamine + an acyl-CoA = a 1,2-diacyl-sn-glycero-3-phosphoethanolamine + CoA. The enzyme catalyses a 1-O-(1Z-alkenyl)-sn-glycero-3-phosphoethanolamine + an acyl-CoA = a 1-O-(1Z-alkenyl)-2-acyl-sn-glycero-3-phosphoethanolamine + CoA. The catalysed reaction is a 1-acyl-sn-glycero-3-phosphocholine + an acyl-CoA = a 1,2-diacyl-sn-glycero-3-phosphocholine + CoA. It catalyses the reaction a 1-O-alkyl-sn-glycero-3-phosphocholine + acetyl-CoA = a 1-O-alkyl-2-acetyl-sn-glycero-3-phosphocholine + CoA. It carries out the reaction a 1-acyl-sn-glycero-3-phospho-L-serine + an acyl-CoA = a 1,2-diacyl-sn-glycero-3-phospho-L-serine + CoA. It participates in lipid metabolism; phospholipid metabolism. Functionally, displays acyl-CoA-dependent lysophospholipid acyltransferase activity with a subset of lysophospholipids as substrates. Prefers long chain acyl-CoAs (C16, C18) as acyl donors. The polypeptide is Lysophospholipid acyltransferase LPCAT4 (lpcat4) (Xenopus tropicalis (Western clawed frog)).